We begin with the raw amino-acid sequence, 96 residues long: UPF0235 protein YpsIP31758_0827 (96 aa).

It belongs to the UPF0235 family.

In Yersinia pseudotuberculosis serotype O:1b (strain IP 31758), this protein is UPF0235 protein YpsIP31758_0827.